Here is a 562-residue protein sequence, read N- to C-terminus: NAD-dependent malic enzyme (562 aa).

The Proton donor role is filled by Y101. R154 is a binding site for NAD(+). Residue K172 is the Proton acceptor of the active site. E243, D244, and D267 together coordinate a divalent metal cation. D267 and N415 together coordinate NAD(+).

Belongs to the malic enzymes family. In terms of assembly, homotetramer. Mg(2+) serves as cofactor. The cofactor is Mn(2+).

The catalysed reaction is (S)-malate + NAD(+) = pyruvate + CO2 + NADH. It carries out the reaction oxaloacetate + H(+) = pyruvate + CO2. This is NAD-dependent malic enzyme from Shewanella piezotolerans (strain WP3 / JCM 13877).